The sequence spans 418 residues: Deubiquitinase and deneddylase Dub1 (418 aa).

Positions 1–10 (MLSPTNSTSK) are enriched in polar residues. Residues 1–23 (MLSPTNSTSKKAPVPPQDSSKPV) form a disordered region. Residues 40–60 (TALAVLLVVVTLGLILLFYSF) traverse the membrane as a helical segment. Residues 72–143 (TRPSTKEQPT…PPLPPKAPKP (72 aa)) form a disordered region. Residues 86-141 (VPLPSPPLAVPRPSTPPPPVISRPSTPPAPTPAISPPSTPSAPKPSTPPPLPPKAP) are compositionally biased toward pro residues. Residues H288, D305, and C358 contribute to the active site.

The protein belongs to the peptidase C48 family.

It is found in the secreted. The protein localises to the host cell. It localises to the membrane. Its function is as follows. Effector proteins function to alter host cell physiology and promote bacterial survival in host tissues. This protease possesses deubiquitinating and deneddylating activities. This Chlamydia trachomatis serovar D (strain ATCC VR-885 / DSM 19411 / UW-3/Cx) protein is Deubiquitinase and deneddylase Dub1 (cdu1).